The chain runs to 664 residues: Protein fem-1 homolog CG6966 (664 aa).

ANK repeat units follow at residues 40–70, 82–111, 115–144, 148–177, 181–210, and 213–242; these read NGAT…NVEQ, EDAP…NVNS, TNST…DFEV, HGHT…DVNR, KGNT…TMDV, and YGMT…VSRE. TPR repeat units lie at residues 245 to 279 and 335 to 368; these read IHAL…RAVE and SYYI…QQKI. The segment at 433–460 is disordered; that stretch reads QQKDQQHPQKQLPAADKSPSCSASSSAS. A compositionally biased stretch (low complexity) spans 450 to 460; sequence SPSCSASSSAS. ANK repeat units follow at residues 529–571 and 575–605; these read FDRT…DPNA and AGNT…HLDT.

Belongs to the fem-1 family. Component of a CRL2 E3 ubiquitin-protein ligase complex, also named ECS (Elongin BC-CUL2/5-SOCS-box protein) complex.

Its pathway is protein modification; protein ubiquitination. Its function is as follows. Substrate-recognition component of a Cul2-RING (CRL2) E3 ubiquitin-protein ligase complex of the DesCEND (destruction via C-end degrons) pathway, which recognizes a C-degron located at the extreme C terminus of target proteins, leading to their ubiquitination and degradation. The C-degron recognized by the DesCEND pathway is usually a motif of less than ten residues and can be present in full-length proteins, truncated proteins or proteolytically cleaved forms. This is Protein fem-1 homolog CG6966 from Drosophila melanogaster (Fruit fly).